The sequence spans 286 residues: 2-hydroxy-6-oxononadienedioate/2-hydroxy-6-oxononatrienedioate hydrolase 2 (286 aa).

Histidine 266 functions as the Proton acceptor in the catalytic mechanism.

It belongs to the AB hydrolase superfamily. MhpC family. As to quaternary structure, homodimer.

It carries out the reaction (2Z,4E)-2-hydroxy-6-oxonona-2,4-dienedioate + H2O = (2Z)-2-hydroxypenta-2,4-dienoate + succinate + H(+). The catalysed reaction is (2Z,4E,7E)-2-hydroxy-6-oxonona-2,4,7-trienedioate + H2O = (2Z)-2-hydroxypenta-2,4-dienoate + fumarate + H(+). It participates in aromatic compound metabolism; 3-phenylpropanoate degradation. Its function is as follows. Catalyzes the cleavage of the C5-C6 bond of 2-hydroxy-6-oxononadienedioate and 2-hydroxy-6-oxononatrienedioate, a dienol ring fission product of the bacterial meta-cleavage pathway for degradation of phenylpropionic acid. The chain is 2-hydroxy-6-oxononadienedioate/2-hydroxy-6-oxononatrienedioate hydrolase 2 from Pseudomonas putida (Arthrobacter siderocapsulatus).